The primary structure comprises 457 residues: Embryogenesis-associated protein EMB8 (457 aa).

The disordered stretch occupies residues 39–59; sequence KKPAAGACEEQDELTSGSAAR. The AB hydrolase-1 domain maps to 151 to 391; the sequence is PVLILLPGLT…LVVTPNGGHL (241 aa). Catalysis depends on charge relay system residues S231, D361, and H390. Residues 438–447 are compositionally biased toward basic and acidic residues; the sequence is VDSVHTRETN. The disordered stretch occupies residues 438 to 457; it reads VDSVHTRETNNYKSPIENVN. Over residues 448–457 the composition is skewed to polar residues; sequence NYKSPIENVN.

This sequence belongs to the AB hydrolase superfamily. AB hydrolase 4 family.

The chain is Embryogenesis-associated protein EMB8 (EMB8) from Picea glauca (White spruce).